The chain runs to 173 residues: Disulfide bond formation protein B (173 aa).

The Cytoplasmic portion of the chain corresponds to 1–14 (MIEFLRRIAAHRLA). Residues 15–31 (WSLLAASALFLELSALF) form a helical membrane-spanning segment. The Periplasmic portion of the chain corresponds to 32-49 (FQHVLGLHPCVMCVYERI). C41 and C44 form a disulfide bridge. A helical membrane pass occupies residues 50–65 (ATLGVLTAGLLGMVAP). Over 66–72 (QKWYVRW) the chain is Cytoplasmic. Residues 73–90 (SALLLWGSSAFWGLKLAL) form a helical membrane-spanning segment. Over 91–145 (KHVDYQVNPSPFNVCEGFVDFPSWAPLDQWIPWMFYPDGDCSEVTWQFLSFSMPQ) the chain is Periplasmic. Residues C105 and C131 are joined by a disulfide bond. A helical transmembrane segment spans residues 146–164 (WLVAIFAVYLLVFVVVAIG). Topologically, residues 165–173 (NLVKGRCCS) are cytoplasmic.

Belongs to the DsbB family.

It is found in the cell inner membrane. Required for disulfide bond formation in some periplasmic proteins. Acts by oxidizing the DsbA protein. The chain is Disulfide bond formation protein B from Aeromonas hydrophila subsp. hydrophila (strain ATCC 7966 / DSM 30187 / BCRC 13018 / CCUG 14551 / JCM 1027 / KCTC 2358 / NCIMB 9240 / NCTC 8049).